A 430-amino-acid polypeptide reads, in one-letter code: uncharacterized protein (430 aa).

The first 19 residues, 1–19, serve as a signal peptide directing secretion; that stretch reads MKILLFVVLFFNVLVGIYS. N-linked (GlcNAc...) asparagine glycosylation is present at N39. A disordered region spans residues 119 to 408; the sequence is LDPNSSPSPS…ELLEKNSDGN (290 aa). Residues 124–168 are compositionally biased toward pro residues; it reads SPSPSPSPSPSPSPSPSPSPSPSPSPSPSPSPSPSPSPSPSPSPS. Composition is skewed to low complexity over residues 169–253 and 263–285; these read PSSS…TPSQ and PTPTQTPSQTPTQTQTPTPTQTP. Polar residues predominate over residues 286 to 303; it reads ISSRPMSISTEKPSSSEE. N-linked (GlcNAc...) asparagine glycosylation occurs at N312. Over residues 316–325 the composition is skewed to basic and acidic residues; sequence SEDKKKDSES. The segment covering 326–370 has biased composition (low complexity); sequence KSSQSESPSPSASASESESASESASASTSVSVSASPLPIMDSSSS. An N-linked (GlcNAc...) asparagine glycan is attached at N408.

It localises to the secreted. This is an uncharacterized protein from Dictyostelium discoideum (Social amoeba).